Reading from the N-terminus, the 261-residue chain is Zinc import ATP-binding protein ZnuC (261 aa).

The 216-residue stretch at 5-220 (ISLKALSVTF…PSYIALFGSA (216 aa)) folds into the ABC transporter domain. 37–44 (GPNGAGKS) provides a ligand contact to ATP. Residues 236-261 (HHDLAGQPVSGDATQCNHHHHGHHHD) form a disordered region. The segment covering 252–261 (NHHHHGHHHD) has biased composition (basic residues).

Belongs to the ABC transporter superfamily. Zinc importer (TC 3.A.1.15.5) family. The complex is composed of two ATP-binding proteins (ZnuC), two transmembrane proteins (ZnuB) and a solute-binding protein (ZnuA).

It is found in the cell inner membrane. The enzyme catalyses Zn(2+)(out) + ATP(in) + H2O(in) = Zn(2+)(in) + ADP(in) + phosphate(in) + H(+)(in). Its function is as follows. Part of the ABC transporter complex ZnuABC involved in zinc import. Responsible for energy coupling to the transport system. This chain is Zinc import ATP-binding protein ZnuC, found in Vibrio vulnificus (strain CMCP6).